We begin with the raw amino-acid sequence, 236 residues long: Orotidine 5'-phosphate decarboxylase (236 aa).

Residues aspartate 16, lysine 38, 65 to 74 (DLKYHDIPNT), threonine 124, arginine 185, glutamine 194, glycine 214, and arginine 215 each bind substrate. The Proton donor role is filled by lysine 67.

The protein belongs to the OMP decarboxylase family. Type 1 subfamily. Homodimer.

The catalysed reaction is orotidine 5'-phosphate + H(+) = UMP + CO2. It functions in the pathway pyrimidine metabolism; UMP biosynthesis via de novo pathway; UMP from orotate: step 2/2. Catalyzes the decarboxylation of orotidine 5'-monophosphate (OMP) to uridine 5'-monophosphate (UMP). This is Orotidine 5'-phosphate decarboxylase from Hydrogenovibrio crunogenus (strain DSM 25203 / XCL-2) (Thiomicrospira crunogena).